The chain runs to 82 residues: Conotoxin C11GB (82 aa).

The N-terminal stretch at 1–22 (MKLTCVMIVAVLFLTAWTVVTA) is a signal peptide. A propeptide spanning residues 23 to 53 (EPHSSNVLENLYLKAHHEMENPEASKLNTRD) is cleaved from the precursor. 3 disulfide bridges follow: Cys-55-Cys-72, Cys-62-Cys-76, and Cys-71-Cys-80.

It belongs to the conotoxin O1 superfamily. As to expression, expressed by the venom duct.

Its subcellular location is the secreted. The chain is Conotoxin C11GB from Conus vexillum (Flag cone).